The chain runs to 438 residues: DNA primase DnaG (438 aa).

The Toprim domain maps to 169–243; it reads DSIIVVEGRA…DIDYVARAPY (75 aa). Mg(2+) contacts are provided by glutamate 175, aspartate 217, and aspartate 219.

This sequence belongs to the archaeal DnaG primase family. Forms a ternary complex with MCM helicase and DNA. It depends on Mg(2+) as a cofactor.

The enzyme catalyses ssDNA + n NTP = ssDNA/pppN(pN)n-1 hybrid + (n-1) diphosphate.. Its function is as follows. RNA polymerase that catalyzes the synthesis of short RNA molecules used as primers for DNA polymerase during DNA replication. This chain is DNA primase DnaG, found in Methanococcus maripaludis (strain C5 / ATCC BAA-1333).